Reading from the N-terminus, the 283-residue chain is Elongation factor Ts (283 aa).

The involved in Mg(2+) ion dislocation from EF-Tu stretch occupies residues 79 to 82 (TDFV).

This sequence belongs to the EF-Ts family.

It is found in the cytoplasm. Its function is as follows. Associates with the EF-Tu.GDP complex and induces the exchange of GDP to GTP. It remains bound to the aminoacyl-tRNA.EF-Tu.GTP complex up to the GTP hydrolysis stage on the ribosome. The sequence is that of Elongation factor Ts from Pseudoalteromonas translucida (strain TAC 125).